The following is a 607-amino-acid chain: Protease Do-like 2, chloroplastic (607 aa).

Residues 41–104 are disordered; sequence SSNIKRKSSR…LSDFSRDQQT (64 aa). The segment covering 87-104 has biased composition (basic and acidic residues); it reads PKKEKKESLSDFSRDQQT. Residues 118–317 are serine protease; it reads VVKVYCTHTA…LTDYERNGKY (200 aa). Residues His159, Asp190, and Ser268 each act as charge relay system in the active site. A PDZ domain is found at 308 to 403; the sequence is LTDYERNGKY…YLISQKFAGD (96 aa).

This sequence belongs to the peptidase S1C family.

It is found in the plastid. It localises to the chloroplast thylakoid membrane. Functionally, serine protease that performs the primary cleavage of the photodamaged D1 protein in plant photosystem II. This chain is Protease Do-like 2, chloroplastic (DEGP2), found in Arabidopsis thaliana (Mouse-ear cress).